An 87-amino-acid polypeptide reads, in one-letter code: Sec-independent protein translocase protein TatA (87 aa).

The chain crosses the membrane as a helical span at residues 1–21; that stretch reads MGGMSITHWIVVAVVVMIFFG. Residues 40 to 87 are disordered; it reads KKGMSEDDTTPPAAPPAPAPRLENQPLPPENTTQNVAQNVPNDIKNNQ. Over residues 69–87 the composition is skewed to polar residues; the sequence is ENTTQNVAQNVPNDIKNNQ.

The protein belongs to the TatA/E family. As to quaternary structure, the Tat system comprises two distinct complexes: a TatABC complex, containing multiple copies of TatA, TatB and TatC subunits, and a separate TatA complex, containing only TatA subunits. Substrates initially bind to the TatABC complex, which probably triggers association of the separate TatA complex to form the active translocon.

It localises to the cell inner membrane. Part of the twin-arginine translocation (Tat) system that transports large folded proteins containing a characteristic twin-arginine motif in their signal peptide across membranes. TatA could form the protein-conducting channel of the Tat system. The protein is Sec-independent protein translocase protein TatA of Zymomonas mobilis subsp. mobilis (strain ATCC 31821 / ZM4 / CP4).